Reading from the N-terminus, the 280-residue chain is Nitrogenase iron-iron protein alpha chain (280 aa).

The [8Fe-7S] cluster site is built by cysteine 5, cysteine 31, and cysteine 94. Residue cysteine 213 participates in [8Fe-9S-C-homocitryl] cluster binding.

It belongs to the NifD/NifK/NifE/NifN family. As to quaternary structure, hexamer of two alpha, two beta, and two delta chains. The cofactor is [8Fe-7S] cluster. Requires [8Fe-9S-C-homocitryl] cluster as cofactor.

The catalysed reaction is N2 + 8 reduced [2Fe-2S]-[ferredoxin] + 16 ATP + 16 H2O = H2 + 8 oxidized [2Fe-2S]-[ferredoxin] + 2 NH4(+) + 16 ADP + 16 phosphate + 6 H(+). This iron-iron protein is part of the nitrogenase complex that catalyzes the key enzymatic reactions in nitrogen fixation. Other nitrogenase complexes utilize a molybdenum-iron protein or a vanadium-iron protein. The protein is Nitrogenase iron-iron protein alpha chain (anfD) of Heliomicrobium gestii (Heliobacterium gestii).